The following is an 873-amino-acid chain: Zinc fingers and homeoboxes protein 1 (873 aa).

Position 36 is a phosphothreonine (threonine 36). The segment at 41–63 (AKAESVSSDEEVHGSVDSDNQQN) is disordered. Residues serine 45, serine 47, and serine 48 each carry the phosphoserine modification. Positions 50–63 (EEVHGSVDSDNQQN) are enriched in basic and acidic residues. 2 consecutive C2H2-type zinc fingers follow at residues 70–93 (YECKYCTFQTPDLNMFTFHVDSEH) and 102–125 (YVCVECNFLTKRYDALSEHNLKYH). Lysine 159 participates in a covalent cross-link: Glycyl lysine isopeptide (Lys-Gly) (interchain with G-Cter in SUMO2). Positions 198–247 (VHHNSAEGTSEEKENGVKASQEENAESVSSSALESNTSTSTINRVHPSPA) are disordered. A Phosphoserine modification is found at serine 202. Positions 223-238 (ESVSSSALESNTSTST) are enriched in low complexity. Positions 272-432 (NSNLLPKVLI…QTNVQKSQVP (161 aa)) are required for dimerization. The segment at 272-564 (NSNLLPKVLI…SQQKQSWNPF (293 aa)) is required for interaction with NFYA. The homeobox 1 DNA-binding region spans 284–346 (NSIPTYNAAL…LKHGVSWTPE (63 aa)). The disordered stretch occupies residues 429–456 (SQVPAAQPATDTKPATAAVPSSPSVRPE). Glycyl lysine isopeptide (Lys-Gly) (interchain with G-Cter in SUMO2) cross-links involve residues lysine 441 and lysine 485. The homeobox 2 DNA-binding region spans 464 to 526 (SFGIRAKKTK…YNQRNSKSNQ (63 aa)). Disordered regions lie at residues 541–568 (DSSDETPEPPAAAASQQKQSWNPFPDFA), 627–668 (DEKI…CKKT), and 731–767 (SSSLNGLSSLRRRGRGRPKGRGRGRPRGRPRGGKRMN). Positions 569–630 (PQKFKEKTAE…KTKALKDEKI (62 aa)) form a DNA-binding region, homeobox 3. Residue lysine 629 forms a Glycyl lysine isopeptide (Lys-Gly) (interchain with G-Cter in SUMO2) linkage. Residue serine 648 is modified to Phosphoserine. The homeobox 4 DNA-binding region spans 660 to 722 (GTGKICKKTP…YAWKNGNLKW (63 aa)). Residues 734-768 (LNGLSSLRRRGRGRPKGRGRGRPRGRPRGGKRMNT) form a required for nuclear localization region. Residues 740 to 764 (LRRRGRGRPKGRGRGRPRGRPRGGK) show a composition bias toward basic residues. Serine 774 is subject to Phosphoserine. Residues 777–832 (KFKTGTAILKDYYLKHKFLNEQDLDELVNRSHMGYEQVREWFAERQRRSELGIELF) constitute a DNA-binding region (homeobox 5). The disordered stretch occupies residues 829-873 (IELFEENEEEDEVVDDQEEDEEETDDSDTWEPPRHVKRKLSKSDD). The span at 831–857 (LFEENEEEDEVVDDQEEDEEETDDSDT) shows a compositional bias: acidic residues. The interval 831–873 (LFEENEEEDEVVDDQEEDEEETDDSDTWEPPRHVKRKLSKSDD) is required for repressor activity. Residues 863–873 (HVKRKLSKSDD) are compositionally biased toward basic residues.

The protein belongs to the ZHX family. In terms of assembly, forms homodimers. Heterodimer (via HD1 domain) with ZHX2 (via HD1 domain). Also forms a heterodimer with ZHX3 which is a prerequisite for repressor activity. Interacts with ATF7IP and NFYA. Interacts (via homeobox domains) with DNMT3B (via PWWP domain). As to expression, widely expressed with highest levels in brain.

The protein resides in the nucleus. Functionally, acts as a transcriptional repressor. Increases DNMT3B-mediated repressive transcriptional activity when DNMT3B is tethered to DNA. May link molecule between DNMT3B and other co-repressor proteins. The protein is Zinc fingers and homeoboxes protein 1 (Zhx1) of Mus musculus (Mouse).